Reading from the N-terminus, the 203-residue chain is Pyridoxal 5'-phosphate synthase subunit PdxT (203 aa).

51 to 53 (GES) is an L-glutamine binding site. Residue cysteine 83 is the Nucleophile of the active site. Residues arginine 110 and 137 to 138 (IR) each bind L-glutamine. Catalysis depends on charge relay system residues histidine 172 and glutamate 174.

Belongs to the glutaminase PdxT/SNO family. In the presence of PdxS, forms a dodecamer of heterodimers. Only shows activity in the heterodimer.

It carries out the reaction aldehydo-D-ribose 5-phosphate + D-glyceraldehyde 3-phosphate + L-glutamine = pyridoxal 5'-phosphate + L-glutamate + phosphate + 3 H2O + H(+). The enzyme catalyses L-glutamine + H2O = L-glutamate + NH4(+). The protein operates within cofactor biosynthesis; pyridoxal 5'-phosphate biosynthesis. Its function is as follows. Catalyzes the hydrolysis of glutamine to glutamate and ammonia as part of the biosynthesis of pyridoxal 5'-phosphate. The resulting ammonia molecule is channeled to the active site of PdxS. The protein is Pyridoxal 5'-phosphate synthase subunit PdxT of Thermoplasma acidophilum (strain ATCC 25905 / DSM 1728 / JCM 9062 / NBRC 15155 / AMRC-C165).